Here is a 343-residue protein sequence, read N- to C-terminus: Lactamase-like protein nscB (343 aa).

The Zn(2+) site is built by His118, His120, Asp122, and His123. The active-site Proton donor/acceptor is Asp122.

The protein belongs to the metallo-beta-lactamase superfamily. It depends on Zn(2+) as a cofactor.

Its pathway is secondary metabolite biosynthesis. Lactamase-like protein; part of the gene cluster that mediates the biosynthesis of neosartoricin B, a prenylated anthracenone that probably exhibits T-cell antiproliferative activity, suggestive of a physiological role as an immunosuppressive agent. The non-reducing polyketide synthase nscA probably synthesizes and cyclizes the decaketide backbone. The hydrolase nscB then mediates the product release through hydrolysis followed by spontaneous decarboxylation. The prenyltransferase nscD catalyzes the addition of the dimethylallyl group to the aromatic C5. The FAD-dependent monooxygenase nscC is then responsible for the stereospecific hydroxylation at C2. Neosartoricin B can be converted into two additional compounds neosartoricins C and D. Neosartoricin C is a spirocyclic compound that is cyclized through the attack of C3 hydroxyl on C14, followed by dehydration. On the other hand, neosartoricin D is a further cyclized compound in which attack of C2 on C14 in neosartoricin C results in the formation of the acetal-containing dioxabicyclo-octanone ring. Both of these compounds are novel and possibly represent related metabolites of the gene cluster. The sequence is that of Lactamase-like protein nscB from Arthroderma otae (strain ATCC MYA-4605 / CBS 113480) (Microsporum canis).